We begin with the raw amino-acid sequence, 439 residues long: Serine hydroxymethyltransferase (439 aa).

127–129 (AHV) lines the (6S)-5,6,7,8-tetrahydrofolate pocket. Position 233 is an N6-(pyridoxal phosphate)lysine (lysine 233).

The protein belongs to the SHMT family. In terms of assembly, homodimer. It depends on pyridoxal 5'-phosphate as a cofactor.

It localises to the cytoplasm. It participates in amino-acid biosynthesis; glycine biosynthesis; glycine from L-serine: step 1/1. In terms of biological role, catalyzes the reversible interconversion of serine and glycine with a modified folate serving as the one-carbon carrier. Also exhibits a pteridine-independent aldolase activity toward beta-hydroxyamino acids, producing glycine and aldehydes, via a retro-aldol mechanism. The polypeptide is Serine hydroxymethyltransferase (Aeropyrum pernix (strain ATCC 700893 / DSM 11879 / JCM 9820 / NBRC 100138 / K1)).